The chain runs to 45 residues: U1-ctenitoxin-Pk1a (45 aa).

4 cysteine pairs are disulfide-bonded: Cys3–Cys16, Cys10–Cys25, Cys15–Cys34, and Cys27–Cys32.

Expressed by the venom gland.

Its subcellular location is the secreted. Functionally, neurotoxin. Causes rapid general flaccid paralysis and death in mice at dose levels of 5 ug per mouse. This chain is U1-ctenitoxin-Pk1a, found in Phoneutria keyserlingi (Brazilian wandering spider).